We begin with the raw amino-acid sequence, 31 residues long: Cytochrome b6-f complex subunit 8 (31 aa).

A helical transmembrane segment spans residues 5 to 25; the sequence is IVSLAWAALMVVFTFSLSLVV.

This sequence belongs to the PetN family. In terms of assembly, the 4 large subunits of the cytochrome b6-f complex are cytochrome b6, subunit IV (17 kDa polypeptide, PetD), cytochrome f and the Rieske protein, while the 4 small subunits are PetG, PetL, PetM and PetN. The complex functions as a dimer.

It localises to the plastid. It is found in the chloroplast thylakoid membrane. Component of the cytochrome b6-f complex, which mediates electron transfer between photosystem II (PSII) and photosystem I (PSI), cyclic electron flow around PSI, and state transitions. In Acorus calamus (Sweet flag), this protein is Cytochrome b6-f complex subunit 8.